Consider the following 495-residue polypeptide: Trigger factor (495 aa).

The PPIase FKBP-type domain maps to 169–254 (GDRVTIDYLG…VKEVAAPGEV (86 aa)). Residues 439–495 (ALLADDESEDKPAAKKAAPKKKAAKAEATEAAAEGEEAAVPKKKAAPKKKAAEDSAE) form a disordered region.

It belongs to the FKBP-type PPIase family. Tig subfamily.

It is found in the cytoplasm. The catalysed reaction is [protein]-peptidylproline (omega=180) = [protein]-peptidylproline (omega=0). Involved in protein export. Acts as a chaperone by maintaining the newly synthesized protein in an open conformation. Functions as a peptidyl-prolyl cis-trans isomerase. The chain is Trigger factor from Rhizobium rhizogenes (strain K84 / ATCC BAA-868) (Agrobacterium radiobacter).